A 635-amino-acid polypeptide reads, in one-letter code: Extracellular metalloproteinase MEP (635 aa).

Positions 1 to 19 are cleaved as a signal peptide; the sequence is MRYSLSLALLGVAAVTVVA. Residues 20–242 constitute a propeptide that is removed on maturation; that stretch reads HPHTPGRHGV…VHGVVDYVSH (223 aa). H428 serves as a coordination point for Zn(2+). E429 is an active-site residue. Residue H432 participates in Zn(2+) binding. N473 carries an N-linked (GlcNAc...) asparagine glycan.

This sequence belongs to the peptidase M36 family. Zn(2+) serves as cofactor.

It localises to the secreted. Its function is as follows. Secreted metalloproteinase that allows assimilation of proteinaceous substrates. In Pyricularia oryzae (strain 70-15 / ATCC MYA-4617 / FGSC 8958) (Rice blast fungus), this protein is Extracellular metalloproteinase MEP (MEP).